Here is a 412-residue protein sequence, read N- to C-terminus: Argininosuccinate synthase (412 aa).

ATP is bound by residues 16-24 and alanine 44; that span reads AYSGGLDTS. 2 residues coordinate L-citrulline: tyrosine 96 and serine 101. Residue glycine 126 participates in ATP binding. Positions 128, 132, and 133 each coordinate L-aspartate. Asparagine 132 contributes to the L-citrulline binding site. The L-citrulline site is built by arginine 136, serine 185, serine 194, glutamate 270, and tyrosine 282.

Belongs to the argininosuccinate synthase family. Type 1 subfamily. As to quaternary structure, homotetramer.

The protein resides in the cytoplasm. It carries out the reaction L-citrulline + L-aspartate + ATP = 2-(N(omega)-L-arginino)succinate + AMP + diphosphate + H(+). It participates in amino-acid biosynthesis; L-arginine biosynthesis; L-arginine from L-ornithine and carbamoyl phosphate: step 2/3. The polypeptide is Argininosuccinate synthase (Shewanella baltica (strain OS185)).